We begin with the raw amino-acid sequence, 365 residues long: GTPase Obg (365 aa).

The region spanning 1–177 (MFTDYVRILA…GQFLLELKTI (177 aa)) is the Obg domain. Residues 64 to 85 (QFAEDGQPGKGQKRKGRDGKNL) form a disordered region. The region spanning 178 to 348 (ADVGFVGLPN…FLNSCRKSFE (171 aa)) is the OBG-type G domain. Residues 184 to 191 (GLPNSGKS), 209 to 213 (FTTLK), 231 to 234 (DIPG), 300 to 303 (NKVD), and 329 to 331 (SAL) each bind GTP. Mg(2+) contacts are provided by Ser-191 and Thr-211.

This sequence belongs to the TRAFAC class OBG-HflX-like GTPase superfamily. OBG GTPase family. As to quaternary structure, monomer. It depends on Mg(2+) as a cofactor.

Its subcellular location is the cytoplasm. Its function is as follows. An essential GTPase which binds GTP, GDP and possibly (p)ppGpp with moderate affinity, with high nucleotide exchange rates and a fairly low GTP hydrolysis rate. Plays a role in control of the cell cycle, stress response, ribosome biogenesis and in those bacteria that undergo differentiation, in morphogenesis control. This Methylacidiphilum infernorum (isolate V4) (Methylokorus infernorum (strain V4)) protein is GTPase Obg.